The chain runs to 175 residues: Two-on-two hemoglobin-3 (175 aa).

Residues Y85 and H98 each coordinate heme. The tract at residues 153 to 175 (QNEKPKHKPQCACKHAANKPAEE) is disordered.

Belongs to the truncated hemoglobin family. Group II subfamily. In terms of assembly, homodimer when ferric. Interacts with RGLG3 and RGLG4. The cofactor is heme. In terms of tissue distribution, expressed ubiquitously, with higher levels in root tissue than in shoot tissue.

Hemoglobin-like protein that exhibits an unusual concentration-independent binding of O(2) and CO. May promote shoot organogenesis from root explants in vitro. Inhibits RGLG3 and RGLG4 ubiquitination activity. This Arabidopsis thaliana (Mouse-ear cress) protein is Two-on-two hemoglobin-3 (GLB3).